Here is an 82-residue protein sequence, read N- to C-terminus: Delta-actitoxin-Aeq2b 2 (82 aa).

Positions 1–19 are cleaved as a signal peptide; that stretch reads MNRLMILVFAAVFLALASA. A propeptide spanning residues 20–26 is cleaved from the precursor; it reads DEDVDIA. 3 disulfides stabilise this stretch: C32–C79, C34–C69, and C62–C80.

It belongs to the sea anemone sodium channel inhibitory toxin family. Type I subfamily.

The protein localises to the secreted. It is found in the nematocyst. Its function is as follows. Binds specifically to voltage-gated sodium channels (Nav), thereby delaying their inactivation during signal transduction. Causes death to crabs. This chain is Delta-actitoxin-Aeq2b 2, found in Actinia equina (Beadlet anemone).